A 509-amino-acid chain; its full sequence is Maturase K (509 aa).

This sequence belongs to the intron maturase 2 family. MatK subfamily.

It is found in the plastid. It localises to the chloroplast. Usually encoded in the trnK tRNA gene intron. Probably assists in splicing its own and other chloroplast group II introns. In Abies firma (Momi fir), this protein is Maturase K.